The primary structure comprises 172 residues: Regulator of hemoglobinization and erythroid cell expansion protein (172 aa).

Residues 9 to 29 form a helical membrane-spanning segment; sequence WHGLVIAVVSLFLQACFLTAI. The disordered stretch occupies residues 52–106; the sequence is VPRPSPGHHHPPAVKEMKETQTERDIPMSDSLYRHDSDTPSDSLDSSCSSPPACQ. The span at 64–89 shows a compositional bias: basic and acidic residues; that stretch reads AVKEMKETQTERDIPMSDSLYRHDSD. Over residues 91-103 the composition is skewed to low complexity; sequence PSDSLDSSCSSPP. Tyrosine 132 and tyrosine 141 each carry phosphotyrosine.

As to quaternary structure, interacts with EPOR; this interaction occurs in a erythropoietin (EPO)-dependent manner. Interacts with JAK2; this interaction occurs in a erythropoietin (EPO)-dependent manner. Interacts (via tyrosine-phosphorylated form) with GRB2. Post-translationally, phosphorylated. Phosphorylation on Tyr-132 and Tyr-141 occurs in a erythropoietin (EPO)-dependent manner. In terms of tissue distribution, expressed in the proerythroblasts (at protein level). Expressed strongly in the kidney. Expressed weakly in the pancreas, liver and lung. Expressed strongly in erythroid progenitor cells (EPCs). Expressed weakly in T-cells and neutrophils.

It localises to the cell membrane. Functionally, acts as a signaling transduction factor of the EPO-EPOR signaling pathway promoting erythroid cell differentiation. In Homo sapiens (Human), this protein is Regulator of hemoglobinization and erythroid cell expansion protein.